We begin with the raw amino-acid sequence, 591 residues long: Negative elongation factor D (591 aa).

The disordered stretch occupies residues 1 to 44 (MAGPAPGTIMGEDYFGNASEWGEEADGGQHQEDDSGEGEDDAEV). Residues 34-44 (DSGEGEDDAEV) are compositionally biased toward acidic residues.

It belongs to the NELF-D family. As to quaternary structure, the NELF complex is composed of NELFA, NELFB, NELFCD and NELFE; NELFA and NELFCD form a stable subcomplex that binds primarily through NELFCD to the N-terminus of NELFB. Binds RNA which may help to stabilize the NELF complex on nucleic acid. In vitro, the NELFA:NELFCD subcomplex binds to ssDNA and ssRNA in a sequence- and structure-dependent manner. Interacts with ARAF1. Interacts with PCF11. Interacts with NELFB. Interacts with KAT8.

It is found in the nucleus. In terms of biological role, essential component of the NELF complex, a complex that negatively regulates the elongation of transcription by RNA polymerase II. The NELF complex, which acts via an association with the DSIF complex and causes transcriptional pausing, is counteracted by the P-TEFb kinase complex. The sequence is that of Negative elongation factor D (Nelfcd) from Mus musculus (Mouse).